We begin with the raw amino-acid sequence, 485 residues long: Delta(14)-sterol reductase (485 aa).

The next 5 helical transmembrane spans lie at Phe-18–Phe-38, Gly-77–Leu-97, Leu-131–Ile-151, Phe-155–Val-175, and Ser-319–Phe-339. Residues Lys-346, Arg-350, Leu-373, Trp-378, and Asn-385 to Tyr-386 each bind NADP(+). A helical membrane pass occupies residues Ala-431–Ile-451. Residues Asp-457, Cys-461–Tyr-465, and Tyr-472 each bind NADP(+).

Belongs to the ERG4/ERG24 family.

The protein localises to the membrane. The enzyme catalyses 4,4-dimethyl-5alpha-cholesta-8,24-dien-3beta-ol + NADP(+) = 4,4-dimethyl-5alpha-cholesta-8,14,24-trien-3beta-ol + NADPH + H(+). The protein operates within steroid biosynthesis; zymosterol biosynthesis; zymosterol from lanosterol: step 2/6. Reduces the C14=C15 double bond of 4,4-dimethyl-cholesta-8,14,24-trienol to produce 4,4-dimethyl-cholesta-8,24-dienol. The sequence is that of Delta(14)-sterol reductase from Fusarium vanettenii (Neocosmospora pisi).